Consider the following 149-residue polypeptide: D-aminoacyl-tRNA deacylase (149 aa).

The short motif at 137 to 138 (GP) is the Gly-cisPro motif, important for rejection of L-amino acids element.

The protein belongs to the DTD family. In terms of assembly, homodimer.

The protein resides in the cytoplasm. It carries out the reaction glycyl-tRNA(Ala) + H2O = tRNA(Ala) + glycine + H(+). The catalysed reaction is a D-aminoacyl-tRNA + H2O = a tRNA + a D-alpha-amino acid + H(+). Its function is as follows. An aminoacyl-tRNA editing enzyme that deacylates mischarged D-aminoacyl-tRNAs. Also deacylates mischarged glycyl-tRNA(Ala), protecting cells against glycine mischarging by AlaRS. Acts via tRNA-based rather than protein-based catalysis; rejects L-amino acids rather than detecting D-amino acids in the active site. By recycling D-aminoacyl-tRNA to D-amino acids and free tRNA molecules, this enzyme counteracts the toxicity associated with the formation of D-aminoacyl-tRNA entities in vivo and helps enforce protein L-homochirality. This Clostridium botulinum (strain ATCC 19397 / Type A) protein is D-aminoacyl-tRNA deacylase.